Reading from the N-terminus, the 274-residue chain is Large ribosomal subunit protein uL2 (274 aa).

The segment at 228–254 (VDHPMGGGEGRASGGHPRSRKGLYAKG) is disordered. Over residues 244-254 (PRSRKGLYAKG) the composition is skewed to basic residues.

The protein belongs to the universal ribosomal protein uL2 family. As to quaternary structure, part of the 50S ribosomal subunit. Forms a bridge to the 30S subunit in the 70S ribosome.

Functionally, one of the primary rRNA binding proteins. Required for association of the 30S and 50S subunits to form the 70S ribosome, for tRNA binding and peptide bond formation. It has been suggested to have peptidyltransferase activity; this is somewhat controversial. Makes several contacts with the 16S rRNA in the 70S ribosome. The sequence is that of Large ribosomal subunit protein uL2 from Azobacteroides pseudotrichonymphae genomovar. CFP2.